Reading from the N-terminus, the 1786-residue chain is uncharacterized protein (1786 aa).

Disordered stretches follow at residues 140-191 (QGLR…LPEA), 203-329 (RRES…RGGV), and 400-480 (GGSD…TPPE). Residues 149-158 (SDMNSQTSLT) are compositionally biased toward polar residues. A compositionally biased stretch (low complexity) spans 232–247 (GHAPEAPAPGESPASS). Polar residues predominate over residues 248–259 (QCLPSQACENDF). Positions 306–329 (TSCRQHREEAGDRAGAGEDKRGGV) are enriched in basic and acidic residues. Residues 422–438 (STTPSTNTTRTPSPISS) show a composition bias toward low complexity. A compositionally biased stretch (pro residues) spans 467–480 (VPPPTGPGTATPPE). Thr721 is subject to Phosphothreonine. Disordered regions lie at residues 746-907 (SESK…SDGH), 1081-1180 (VRDV…NSSP), 1218-1242 (ASAQ…PKPA), 1291-1348 (KEGV…VSAR), 1362-1460 (SLYI…NSDC), and 1477-1550 (LLGR…EHTP). Basic and acidic residues-rich tracts occupy residues 810 to 828 (MQRE…DTSH) and 845 to 861 (KPWE…HSEA). Positions 1105-1115 (KGSGDSSDKGS) are enriched in low complexity. Positions 1131 to 1140 (TPASGGSRSL) are enriched in polar residues. Over residues 1153 to 1164 (PREEGVDREPRE) the composition is skewed to basic and acidic residues. The span at 1167–1180 (SQVSNGGRLLNSSP) shows a compositional bias: polar residues. Ser1179 is modified (phosphoserine). 2 stretches are compositionally biased toward basic and acidic residues: residues 1223-1238 (TPEK…EGKA) and 1301-1319 (DPDK…DTGH). Composition is skewed to polar residues over residues 1336–1345 (RNSNPSTESV), 1389–1401 (NVFT…TQKT), and 1504–1521 (ARSQ…SGTS). Residue Arg1767 is modified to Omega-N-methylarginine.

This is an uncharacterized protein from Mus musculus (Mouse).